A 158-amino-acid polypeptide reads, in one-letter code: SsrA-binding protein (158 aa).

Belongs to the SmpB family.

Its subcellular location is the cytoplasm. In terms of biological role, required for rescue of stalled ribosomes mediated by trans-translation. Binds to transfer-messenger RNA (tmRNA), required for stable association of tmRNA with ribosomes. tmRNA and SmpB together mimic tRNA shape, replacing the anticodon stem-loop with SmpB. tmRNA is encoded by the ssrA gene; the 2 termini fold to resemble tRNA(Ala) and it encodes a 'tag peptide', a short internal open reading frame. During trans-translation Ala-aminoacylated tmRNA acts like a tRNA, entering the A-site of stalled ribosomes, displacing the stalled mRNA. The ribosome then switches to translate the ORF on the tmRNA; the nascent peptide is terminated with the 'tag peptide' encoded by the tmRNA and targeted for degradation. The ribosome is freed to recommence translation, which seems to be the essential function of trans-translation. The polypeptide is SsrA-binding protein (Caldicellulosiruptor saccharolyticus (strain ATCC 43494 / DSM 8903 / Tp8T 6331)).